Consider the following 240-residue polypeptide: Pathogenesis-related thaumatin-like protein 3.5 (240 aa).

The first 20 residues, 1–20 (MASLRLATLAMMVLFGSCRA), serve as a signal peptide directing secretion. 8 disulfide bridges follow: Cys31–Cys237, Cys79–Cys89, Cys94–Cys100, Cys145–Cys227, Cys150–Cys210, Cys158–Cys173, Cys177–Cys186, and Cys187–Cys197.

It belongs to the thaumatin family. Strongly expressed in pollen grains. Also present at weak levels in seedling roots, in sapling stems and in developing male strobili.

In terms of biological role, may be involved in disease resistance. In Cryptomeria japonica (Japanese cedar), this protein is Pathogenesis-related thaumatin-like protein 3.5.